A 388-amino-acid chain; its full sequence is Galactokinase (388 aa).

33 to 36 (EHTD) contacts substrate. ATP contacts are provided by residues Ser-67 and 124–130 (GSGLSSS). Ser-130 and Glu-162 together coordinate Mg(2+). The active-site Proton acceptor is the Asp-174. Tyr-224 is a substrate binding site.

Belongs to the GHMP kinase family. GalK subfamily.

The protein localises to the cytoplasm. The catalysed reaction is alpha-D-galactose + ATP = alpha-D-galactose 1-phosphate + ADP + H(+). Its pathway is carbohydrate metabolism; galactose metabolism. Catalyzes the transfer of the gamma-phosphate of ATP to D-galactose to form alpha-D-galactose-1-phosphate (Gal-1-P). The protein is Galactokinase of Streptococcus thermophilus.